The sequence spans 478 residues: Succinyl-CoA:acetate/propanoyl-CoA:succinate CoA transferase (478 aa).

Residues 1–30 constitute a mitochondrion transit peptide; that stretch reads MYQLAFLRCRYASPIVREARRAFHASRKCQ. 256–260 provides a ligand contact to CoA; the sequence is GIGAI. E279 acts as the 5-glutamyl coenzyme A thioester intermediate in catalysis. CoA-binding residues include I354, G377, and K404.

This sequence belongs to the acetyl-CoA hydrolase/transferase family.

The protein localises to the mitochondrion. It catalyses the reaction succinyl-CoA + acetate = succinate + acetyl-CoA. The enzyme catalyses propanoyl-CoA + succinate = propanoate + succinyl-CoA. Functionally, transferase involved in anaerobic fumarate-respiration in the mitochondria. Catalyzes the transfer of the CoA moiety of acetyl-CoA or propionyl-CoA to succinate, thereby forming acetate and propionate, respectively. Acetate and propionate are the two major metabolic end products in the anaerobic mitochondrial metabolism of F.hepatica. Also displays CoA transferase activities from acetyl-CoA to propionate, acetate and butyrate. The chain is Succinyl-CoA:acetate/propanoyl-CoA:succinate CoA transferase from Fasciola hepatica (Liver fluke).